A 645-amino-acid polypeptide reads, in one-letter code: Nucleolar GTP-binding protein 1 (645 aa).

In terms of domain architecture, OBG-type G spans 168–340 (RTLLICGYPN…VRNKACEKLL (173 aa)). Residues 174 to 181 (GYPNVGKS), 220 to 224 (DTPGI), and 288 to 291 (NKTD) each bind GTP. Residues 567-645 (GQNDSMASGS…KRGIGKSDFR (79 aa)) are disordered. Over residues 612–624 (NRDARQGEADRHA) the composition is skewed to basic and acidic residues.

The protein belongs to the TRAFAC class OBG-HflX-like GTPase superfamily. OBG GTPase family. NOG subfamily.

It localises to the nucleus. It is found in the nucleolus. Functionally, involved in the biogenesis of the 60S ribosomal subunit. This is Nucleolar GTP-binding protein 1 (NOG1) from Candida glabrata (strain ATCC 2001 / BCRC 20586 / JCM 3761 / NBRC 0622 / NRRL Y-65 / CBS 138) (Yeast).